Consider the following 461-residue polypeptide: ATP synthase subunit beta (461 aa).

151–158 contacts ATP; sequence GGAGVGKT.

The protein belongs to the ATPase alpha/beta chains family. In terms of assembly, F-type ATPases have 2 components, CF(1) - the catalytic core - and CF(0) - the membrane proton channel. CF(1) has five subunits: alpha(3), beta(3), gamma(1), delta(1), epsilon(1). CF(0) has three main subunits: a(1), b(2) and c(9-12). The alpha and beta chains form an alternating ring which encloses part of the gamma chain. CF(1) is attached to CF(0) by a central stalk formed by the gamma and epsilon chains, while a peripheral stalk is formed by the delta and b chains.

Its subcellular location is the cell inner membrane. The enzyme catalyses ATP + H2O + 4 H(+)(in) = ADP + phosphate + 5 H(+)(out). Its function is as follows. Produces ATP from ADP in the presence of a proton gradient across the membrane. The catalytic sites are hosted primarily by the beta subunits. The polypeptide is ATP synthase subunit beta (Alteromonas mediterranea (strain DSM 17117 / CIP 110805 / LMG 28347 / Deep ecotype)).